Here is a 197-residue protein sequence, read N- to C-terminus: Nucleoid occlusion factor SlmA (197 aa).

The 61-residue stretch at 7 to 67 (INRREHILQC…GLIDFIEESL (61 aa)) folds into the HTH tetR-type domain. Residues 30–49 (TTAKLAAEVGVSEAALYRHF) constitute a DNA-binding region (H-T-H motif).

This sequence belongs to the nucleoid occlusion factor SlmA family. In terms of assembly, homodimer. Interacts with FtsZ.

It is found in the cytoplasm. The protein localises to the nucleoid. Functionally, required for nucleoid occlusion (NO) phenomenon, which prevents Z-ring formation and cell division over the nucleoid. Acts as a DNA-associated cell division inhibitor that binds simultaneously chromosomal DNA and FtsZ, and disrupts the assembly of FtsZ polymers. SlmA-DNA-binding sequences (SBS) are dispersed on non-Ter regions of the chromosome, preventing FtsZ polymerization at these regions. The chain is Nucleoid occlusion factor SlmA from Shewanella woodyi (strain ATCC 51908 / MS32).